The chain runs to 479 residues: Probable periplasmic serine endoprotease DegP-like (479 aa).

The first 27 residues, 1-27 (MSIPRMKSYFSLIAAVLMLGQVATAQA), serve as a signal peptide directing secretion. The disordered stretch occupies residues 77–99 (LERSMPPGSRPPGAGKGDRQRET). Active-site charge relay system residues include His119, Asp149, and Ser222. Substrate is bound by residues 220 to 222 (GNS) and 277 to 281 (LGVVI). PDZ domains are found at residues 266 to 357 (LKAS…IRDG) and 363 to 468 (TVTV…LRQG).

This sequence belongs to the peptidase S1C family.

It localises to the periplasm. It carries out the reaction Acts on substrates that are at least partially unfolded. The cleavage site P1 residue is normally between a pair of hydrophobic residues, such as Val-|-Val.. In terms of biological role, might be efficient in the degradation of transiently denatured and unfolded proteins which accumulate in the periplasm following stress conditions. The sequence is that of Probable periplasmic serine endoprotease DegP-like (mucD) from Pseudomonas savastanoi pv. phaseolicola (strain 1448A / Race 6) (Pseudomonas syringae pv. phaseolicola (strain 1448A / Race 6)).